Here is a 318-residue protein sequence, read N- to C-terminus: Mitochondrial fission regulator 1 (318 aa).

Disordered stretches follow at residues 101–121 (RPLR…AQQS) and 154–193 (QEQS…PSMQ). Positions 124–157 (VINDEAIQKISVLETELAKLRAQIAQIVQAQEQS) form a coiled coil. The span at 154–164 (QEQSAQSTAPA) shows a compositional bias: low complexity. Residues 165 to 189 (PGGPPVPPPMVPVPPPPPPPPPCPT) show a composition bias toward pro residues. Residues 168-296 (PPVPPPMVPV…TFTFTAFENK (129 aa)) form a necessary and sufficient to promote mitochondrial fission region.

It belongs to the MTFR1 family.

It is found in the mitochondrion. Its function is as follows. May play a role in mitochondrial aerobic respiration. May also regulate mitochondrial organization and fission. This Danio rerio (Zebrafish) protein is Mitochondrial fission regulator 1 (mtfr1).